A 742-amino-acid polypeptide reads, in one-letter code: Photosystem I P700 chlorophyll a apoprotein A2 (742 aa).

8 helical membrane-spanning segments follow: residues 46 to 69 (LFST…FHIA), 135 to 158 (LFQA…LHLQ), 175 to 199 (LNHH…HVAI), 273 to 291 (IAHH…GHMY), 336 to 359 (LHFQ…QHMG), 375 to 401 (SALY…IFFV), 423 to 445 (ALIS…IYVH), and 525 to 543 (FLVH…LILI). [4Fe-4S] cluster-binding residues include cysteine 567 and cysteine 576. Transmembrane regions (helical) follow at residues 583–604 (AMYL…YWHW) and 651–673 (LSVW…MFLI). Divinyl chlorophyll a-binding residues include histidine 662, methionine 670, and tyrosine 678. Tryptophan 679 lines the phylloquinone pocket. The chain crosses the membrane as a helical span at residues 715-735 (LVGLAHFTIGNILTFGAFVIA).

Belongs to the PsaA/PsaB family. In terms of assembly, the PsaA/B heterodimer binds the P700 divinyl chlorophyll special pair and subsequent electron acceptors. PSI consists of a core antenna complex that captures photons, and an electron transfer chain that converts photonic excitation into a charge separation. The cyanobacterial PSI reaction center is composed of one copy each of PsaA,B,C,D,E,F,I,J,K,L,M and X, and forms trimeric complexes. Requires PSI electron transfer chain: 5 divinyl chlorophyll a, 1 divinyl chlorophyll a', 2 phylloquinones and 3 4Fe-4S clusters. PSI core antenna: 90 divinyl chlorophyll a, 22 carotenoids, 3 phospholipids and 1 galactolipid. P700 is a divinyl chlorophyll a/divinyl chlorophyll a' dimer, A0 is one or more divinyl chlorophyll a, A1 is one or both phylloquinones and FX is a shared 4Fe-4S iron-sulfur center. as cofactor.

It is found in the cellular thylakoid membrane. The enzyme catalyses reduced [plastocyanin] + hnu + oxidized [2Fe-2S]-[ferredoxin] = oxidized [plastocyanin] + reduced [2Fe-2S]-[ferredoxin]. Its function is as follows. PsaA and PsaB bind P700, the primary electron donor of photosystem I (PSI), as well as the electron acceptors A0, A1 and FX. PSI is a plastocyanin/cytochrome c6-ferredoxin oxidoreductase, converting photonic excitation into a charge separation, which transfers an electron from the donor P700 chlorophyll pair to the spectroscopically characterized acceptors A0, A1, FX, FA and FB in turn. Oxidized P700 is reduced on the lumenal side of the thylakoid membrane by plastocyanin or cytochrome c6. The sequence is that of Photosystem I P700 chlorophyll a apoprotein A2 from Prochlorococcus marinus (strain MIT 9515).